Reading from the N-terminus, the 556-residue chain is Glucose-6-phosphate isomerase (556 aa).

Residue E360 is the Proton donor of the active site. Residues H391 and K519 contribute to the active site.

It belongs to the GPI family.

Its subcellular location is the cytoplasm. It carries out the reaction alpha-D-glucose 6-phosphate = beta-D-fructose 6-phosphate. The protein operates within carbohydrate biosynthesis; gluconeogenesis. It functions in the pathway carbohydrate degradation; glycolysis; D-glyceraldehyde 3-phosphate and glycerone phosphate from D-glucose: step 2/4. Functionally, catalyzes the reversible isomerization of glucose-6-phosphate to fructose-6-phosphate. The chain is Glucose-6-phosphate isomerase from Acinetobacter baumannii (strain ATCC 17978 / DSM 105126 / CIP 53.77 / LMG 1025 / NCDC KC755 / 5377).